A 444-amino-acid polypeptide reads, in one-letter code: Putative cytochrome P450 120 (444 aa).

A heme-binding site is contributed by Cys391.

Belongs to the cytochrome P450 family. The cofactor is heme.

This Synechocystis sp. (strain ATCC 27184 / PCC 6803 / Kazusa) protein is Putative cytochrome P450 120 (cyp120).